The following is a 430-amino-acid chain: Trigger factor (430 aa).

The region spanning 157–242 (GDLVALETWS…AVEVSEPVLP (86 aa)) is the PPIase FKBP-type domain.

It belongs to the FKBP-type PPIase family. Tig subfamily.

The protein localises to the cytoplasm. It catalyses the reaction [protein]-peptidylproline (omega=180) = [protein]-peptidylproline (omega=0). Its function is as follows. Involved in protein export. Acts as a chaperone by maintaining the newly synthesized protein in an open conformation. Functions as a peptidyl-prolyl cis-trans isomerase. This chain is Trigger factor, found in Xanthomonas oryzae pv. oryzae (strain MAFF 311018).